The chain runs to 149 residues: FAD synthase (149 aa).

ATP contacts are provided by residues 9–10 (TF), 14–17 (HPGH), asparagine 92, and tyrosine 119.

The protein belongs to the archaeal FAD synthase family. In terms of assembly, homodimer. It depends on a divalent metal cation as a cofactor.

The catalysed reaction is FMN + ATP + H(+) = FAD + diphosphate. Its pathway is cofactor biosynthesis; FAD biosynthesis; FAD from FMN: step 1/1. Functionally, catalyzes the transfer of the AMP portion of ATP to flavin mononucleotide (FMN) to produce flavin adenine dinucleotide (FAD) coenzyme. The chain is FAD synthase from Methanoculleus marisnigri (strain ATCC 35101 / DSM 1498 / JR1).